Here is a 105-residue protein sequence, read N- to C-terminus: uncharacterized protein (105 aa).

Residues Met-1–Gly-19 form the signal peptide.

This is an uncharacterized protein from Magallana gigas (Pacific oyster).